The following is a 21-amino-acid chain: MGIIAGIIKFIKGLIEKFTGK.

It belongs to the phenol-soluble modulin alpha peptides family.

Its function is as follows. Peptide which can recruit, activate and subsequently lyse human neutrophils, thus eliminating the main cellular defense against infection. The chain is Phenol-soluble modulin alpha 2 peptide (psmA2) from Staphylococcus aureus (strain USA300 / TCH1516).